The chain runs to 765 residues: MLADLGLIGTIGEDDEVPVEPESDSGDEEEEGPIVLGRRQKALGKNRSADFNPDFVFTEKEGTYDGSWALADVMSQLKKKRAATTLDEKIEKVRKKRKTEDKEAKSGKLEKEKEAKEGSEPKEQEDLQENDEEGSEDEASETDYSSADENILTKADTLKVKDRKKKKKKGQEAGGFFEDASQYDENLSFQDMNLSRPLLKAITAMGFKQPTPIQKACIPVGLLGKDICACAATGTGKTAAFALPVLERLIYKPRQAPVTRVLVLVPTRELGIQVHSVTRQLAQFCNITTCLAVGGLDVKSQEAALRAAPDILIATPGRLIDHLHNCPSFHLSSIEVLILDEADRMLDEYFEEQMKEIIRMCSHHRQTMLFSATMTDEVKDLASVSLKNPVRIFVNSNTDVAPFLRQEFIRIRPNREGDREAIVAALLTRTFTDHVMLFTQTKKQAHRMHILLGLMGLQVGELHGNLSQTQRLEALRRFKDEQIDILVATDVAARGLDIEGVKTVINFTMPNTIKHYVHRVGRTARAGRAGRSVSLVGEDERKMLKEIVKAAKAPVKARILPQDVILKFRDKIEKMEKDVYAVLQLEAEEKEMQQSEAQINTAKRLLEKGKEAVVQEPERSWFQTKEERKKEKIAKALQEFDLALRGKKKRKKFMKDAKKKGEMTAEERSQFEILKAQMFAERLAKRNRRAKRARAMPEEEPVRGPAKKQKQGKKSVFDEELTNTSKKALKQYRAGPSFEERKQLGLPHQRRGGNFKSKSRYKRRK.

Residues Ser-23, Ser-25, and Ser-48 each carry the phosphoserine modification. The span at 43 to 63 (LGKNRSADFNPDFVFTEKEGT) shows a compositional bias: acidic residues. Disordered stretches follow at residues 43–83 (LGKN…KRAA) and 111–179 (KEKE…FFED). The short motif at 55 to 57 (FVF) is the Required for interaction with the PEBOW complex element. Positions 129-156 (ENDEEGSEDEASETDYSSADENILTKAD) are enriched in basic and acidic residues. Phosphoserine occurs at positions 135 and 146. The segment covering 157-172 (TLKVKDRKKKKKKGQE) has biased composition (acidic residues). The Nuclear localization signal signature appears at 164 to 169 (KKKKKK). Residues 187 to 215 (LSFQDMNLSRPLLKAITAMGFKQPTPIQK) carry the Q motif motif. The region spanning 218–392 (IPVGLLGKDI…SVSLKNPVRI (175 aa)) is the Helicase ATP-binding domain. ATP is bound at residue 231–238 (AATGTGKT). The short motif at 340–343 (DEAD) is the DEAD box element. Residues 426–572 (LLTRTFTDHV…DVILKFRDKI (147 aa)) form the Helicase C-terminal domain. Basic residues predominate over residues 716 to 725 (VFDEELTNTS).

The protein belongs to the DEAD box helicase family. DDX27/DRS1 subfamily. Associates with PeBoW complex, composed of BOP1, PES1 and WDR12. Interacts directly with BOP1 and PES1.

It is found in the nucleus. The protein resides in the nucleolus. The protein localises to the chromosome. The catalysed reaction is ATP + H2O = ADP + phosphate + H(+). Functionally, probable ATP-dependent RNA helicase. Component of the nucleolar ribosomal RNA (rRNA) processing machinery that regulates 3' end formation of ribosomal 47S rRNA. This is Probable ATP-dependent RNA helicase DDX27 (DDX27) from Homo sapiens (Human).